The chain runs to 891 residues: Translation initiation factor IF-2 (891 aa).

One can recognise a tr-type G domain in the interval 390-559 (NRAPIVTIMG…LLQSDMLELK (170 aa)). Residues 399 to 406 (GHVDHGKT) form a G1 region. Residue 399 to 406 (GHVDHGKT) participates in GTP binding. Residues 424–428 (GITQS) are G2. The interval 445-448 (DTPG) is G3. GTP contacts are provided by residues 445 to 449 (DTPGH) and 499 to 502 (NKID). Residues 499–502 (NKID) are G4. The segment at 535–537 (SAT) is G5.

It belongs to the TRAFAC class translation factor GTPase superfamily. Classic translation factor GTPase family. IF-2 subfamily.

Its subcellular location is the cytoplasm. Its function is as follows. One of the essential components for the initiation of protein synthesis. Protects formylmethionyl-tRNA from spontaneous hydrolysis and promotes its binding to the 30S ribosomal subunits. Also involved in the hydrolysis of GTP during the formation of the 70S ribosomal complex. In Blochmanniella pennsylvanica (strain BPEN), this protein is Translation initiation factor IF-2.